A 506-amino-acid chain; its full sequence is ATP synthase subunit alpha (506 aa).

170–177 contacts ATP; that stretch reads GDRQTGKT.

It belongs to the ATPase alpha/beta chains family. As to quaternary structure, F-type ATPases have 2 components, CF(1) - the catalytic core - and CF(0) - the membrane proton channel. CF(1) has five subunits: alpha(3), beta(3), gamma(1), delta(1), epsilon(1). CF(0) has four main subunits: a(1), b(1), b'(1) and c(9-12).

It is found in the cellular thylakoid membrane. The enzyme catalyses ATP + H2O + 4 H(+)(in) = ADP + phosphate + 5 H(+)(out). In terms of biological role, produces ATP from ADP in the presence of a proton gradient across the membrane. The alpha chain is a regulatory subunit. The polypeptide is ATP synthase subunit alpha (Synechococcus sp. (strain CC9902)).